A 194-amino-acid chain; its full sequence is 7-methyl-GTP pyrophosphatase (194 aa).

The active-site Proton acceptor is the Asp-69.

The protein belongs to the Maf family. YceF subfamily. The cofactor is a divalent metal cation.

Its subcellular location is the cytoplasm. The catalysed reaction is N(7)-methyl-GTP + H2O = N(7)-methyl-GMP + diphosphate + H(+). Its function is as follows. Nucleoside triphosphate pyrophosphatase that hydrolyzes 7-methyl-GTP (m(7)GTP). May have a dual role in cell division arrest and in preventing the incorporation of modified nucleotides into cellular nucleic acids. The chain is 7-methyl-GTP pyrophosphatase (yceF1) from Salmonella paratyphi A (strain ATCC 9150 / SARB42).